Consider the following 274-residue polypeptide: 2,3,4,5-tetrahydropyridine-2,6-dicarboxylate N-succinyltransferase (274 aa).

2 residues coordinate substrate: R104 and D141.

This sequence belongs to the transferase hexapeptide repeat family. Homotrimer.

It localises to the cytoplasm. It carries out the reaction (S)-2,3,4,5-tetrahydrodipicolinate + succinyl-CoA + H2O = (S)-2-succinylamino-6-oxoheptanedioate + CoA. It participates in amino-acid biosynthesis; L-lysine biosynthesis via DAP pathway; LL-2,6-diaminopimelate from (S)-tetrahydrodipicolinate (succinylase route): step 1/3. The sequence is that of 2,3,4,5-tetrahydropyridine-2,6-dicarboxylate N-succinyltransferase from Edwardsiella ictaluri (strain 93-146).